A 97-amino-acid polypeptide reads, in one-letter code: Co-chaperonin GroES (97 aa).

Belongs to the GroES chaperonin family. As to quaternary structure, heptamer of 7 subunits arranged in a ring. Interacts with the chaperonin GroEL.

The protein resides in the cytoplasm. In terms of biological role, together with the chaperonin GroEL, plays an essential role in assisting protein folding. The GroEL-GroES system forms a nano-cage that allows encapsulation of the non-native substrate proteins and provides a physical environment optimized to promote and accelerate protein folding. GroES binds to the apical surface of the GroEL ring, thereby capping the opening of the GroEL channel. This Burkholderia cepacia (Pseudomonas cepacia) protein is Co-chaperonin GroES.